A 130-amino-acid polypeptide reads, in one-letter code: uncharacterized protein (130 aa).

Belongs to the HesB/IscA family.

This is an uncharacterized protein from Buchnera aphidicola subsp. Acyrthosiphon pisum (strain APS) (Acyrthosiphon pisum symbiotic bacterium).